The following is a 560-amino-acid chain: Putative protease Do-like 11, mitochondrial (560 aa).

Residues 1–65 constitute a mitochondrion transit peptide; it reads MFFRPCVHTV…RRSSTSAAER (65 aa). Residues 117–302 are serine protease; it reads TEYSKSKPWK…ESRQYSCFGS (186 aa). Residues histidine 150, aspartate 184, and serine 258 each act as charge relay system in the active site. A PDZ domain is found at 288-384; sequence ITSVQESRQY…YLVSMKKPGE (97 aa).

Belongs to the peptidase S1C family.

The protein localises to the mitochondrion membrane. Putative serine protease. The sequence is that of Putative protease Do-like 11, mitochondrial (DEGP11) from Arabidopsis thaliana (Mouse-ear cress).